A 620-amino-acid polypeptide reads, in one-letter code: Probable protein arginine N-methyltransferase 3 (620 aa).

Residues 1 to 17 are compositionally biased toward basic and acidic residues; it reads MATREHELRPEQERLGE. A disordered region spans residues 1-45; sequence MATREHELRPEQERLGEDREEYEDGEEEEEEGEEGWDDWESDGDD. The segment covering 18-45 has biased composition (acidic residues); sequence DREEYEDGEEEEEEGEEGWDDWESDGDD. The C2H2-type 1 zinc-finger motif lies at 55–78; that stretch reads LLCLFCSARFDSESSLFSHCASEH. The C2H2-type 2; degenerate zinc finger occupies 110–137; it reads NKCWSCGQVFSSNSELCGHLHALEIPQL. The SAM-dependent MTase PRMT-type domain occupies 253 to 582; that stretch reads DESYFGSYSS…DECPAVMIRS (330 aa). S-adenosyl-L-homocysteine contacts are provided by Arg-275, Gly-299, Asp-321, Ser-323, and Glu-364. Residues Glu-383 and Glu-392 contribute to the active site.

The protein belongs to the class I-like SAM-binding methyltransferase superfamily. Protein arginine N-methyltransferase family.

It is found in the cytoplasm. It localises to the cytosol. The catalysed reaction is L-arginyl-[protein] + S-adenosyl-L-methionine = N(omega)-methyl-L-arginyl-[protein] + S-adenosyl-L-homocysteine + H(+). The enzyme catalyses L-arginyl-[protein] + 2 S-adenosyl-L-methionine = N(omega),N(omega)-dimethyl-L-arginyl-[protein] + 2 S-adenosyl-L-homocysteine + 2 H(+). In terms of biological role, protein-arginine N-methyltransferase that catalyzes both the monomethylation and asymmetric dimethylation of the guanidino nitrogens of arginine residues in target proteins, and therefore falls into the group of type I methyltransferases. This Oryza sativa subsp. japonica (Rice) protein is Probable protein arginine N-methyltransferase 3 (PRMT3).